A 798-amino-acid polypeptide reads, in one-letter code: Peroxisome proliferator-activated receptor gamma coactivator 1-alpha (798 aa).

Position 79 is an N6-acetyllysine (lysine 79). The tract at residues 100 to 140 is disordered; sequence PVDEDGLPSFDALTDGDVTTDNEASPSSMPDGTPPPQEAEE. Polar residues predominate over residues 116-129; the sequence is DVTTDNEASPSSMP. Residues 144–148 carry the LXXLL motif motif; that stretch reads LKKLL. Lysine 146 carries the N6-acetyllysine modification. Residue threonine 178 is modified to Phosphothreonine; by AMPK. An N6-acetyllysine modification is found at lysine 184. A disordered region spans residues 213-277; that stretch reads YLTTNDDPPH…NDPKGSPFEN (65 aa). The span at 219–237 shows a compositional bias: basic and acidic residues; it reads DPPHTKPTENRNSSRDKCT. N6-acetyllysine occurs at positions 254, 271, 278, and 321. The interval 290-351 is disordered; it reads GTAGLTPPTT…NNSTKKGPEQ (62 aa). The interaction with PPARG stretch occupies residues 293-339; that stretch reads GLTPPTTPPHKANQDNPFRASPKLKSSCKTVVPPPSKKPRYSESSGT. Residues 334–346 show a composition bias toward polar residues; the sequence is SESSGTQGNNSTK. 4 positions are modified to N6-acetyllysine: lysine 347, lysine 413, lysine 442, and lysine 451. The mediates interaction with RNF34 stretch occupies residues 350–798; that stretch reads EQSELYAQLS…LKEAQRSLRR (449 aa). Position 539 is a phosphoserine; by AMPK (serine 539). 3 disordered regions span residues 542–599, 613–639, and 650–669; these read SFNS…SSRS, HRNSPLYVRSRSRSPYSRRPRYDSYEE, and YRREYEKRESERAKQRERQR. A compositionally biased stretch (basic residues) spans 563 to 578; that stretch reads QRMRSRSRSFSRHRSC. Positions 579-599 are enriched in low complexity; sequence SRSPYSRSRSRSPGSRSSSRS. A compositionally biased stretch (basic residues) spans 622 to 631; it reads SRSRSPYSRR. The region spanning 677–753 is the RRM domain; sequence RVIYVGKIRP…TDFELYFCGR (77 aa). N6-acetyllysine occurs at positions 758 and 779.

In terms of assembly, homooligomer. Interacts with MYBBP1A; inhibits MYBBP1A transcriptional activation. Interacts with PRDM16, LPIN1 and PML. Interacts (via LXXLL motif) with RORA and RORC (via AF-2 motif); activates RORA and RORC transcriptional activation. Interacts with LRPPRC. Interacts with FOXO1. Interacts with NR5A2. In terms of processing, phosphorylation by AMPK in skeletal muscle increases activation of its own promoter. Phosphorylated by CLK2. Post-translationally, heavily acetylated by KAT2A/GCN5 under conditions of high nutrients, leading to inactivation of PPARGC1A. Deacetylated by SIRT1 in low nutrients/high NAD conditions, leading to its activation. Ubiquitinated. Ubiquitination by RNF34 induces proteasomal degradation. In terms of tissue distribution, heart, skeletal muscle, liver and kidney. Expressed at lower levels in brain and pancreas and at very low levels in the intestine and white adipose tissue. In skeletal muscle, levels were lower in obese than in lean subjects and fasting induced a 2-fold increase in levels in the skeletal muscle in obese subjects.

The protein resides in the nucleus. It localises to the PML body. The protein localises to the cytoplasm. Transcriptional coactivator for steroid receptors and nuclear receptors. Greatly increases the transcriptional activity of PPARG and thyroid hormone receptor on the uncoupling protein promoter. Can regulate key mitochondrial genes that contribute to the program of adaptive thermogenesis. Plays an essential role in metabolic reprogramming in response to dietary availability through coordination of the expression of a wide array of genes involved in glucose and fatty acid metabolism. Acts as a key regulator of gluconeogenesis: stimulates hepatic gluconeogenesis by increasing the expression of gluconeogenic enzymes, and acting together with FOXO1 to promote the fasting gluconeogenic program. Induces the expression of PERM1 in the skeletal muscle in an ESRRA-dependent manner. Also involved in the integration of the circadian rhythms and energy metabolism. Required for oscillatory expression of clock genes, such as BMAL1 and NR1D1, through the coactivation of RORA and RORC, and metabolic genes, such as PDK4 and PEPCK. This Homo sapiens (Human) protein is Peroxisome proliferator-activated receptor gamma coactivator 1-alpha (PPARGC1A).